The chain runs to 40 residues: Photosystem II reaction center protein J (40 aa).

The helical transmembrane segment at 8–28 (IPLWIIGTVTGLLVIGLIGIF) threads the bilayer.

This sequence belongs to the PsbJ family. In terms of assembly, PSII is composed of 1 copy each of membrane proteins PsbA, PsbB, PsbC, PsbD, PsbE, PsbF, PsbH, PsbI, PsbJ, PsbK, PsbL, PsbM, PsbT, PsbX, PsbY, PsbZ, Psb30/Ycf12, at least 3 peripheral proteins of the oxygen-evolving complex and a large number of cofactors. It forms dimeric complexes.

The protein localises to the plastid. The protein resides in the chloroplast thylakoid membrane. Functionally, one of the components of the core complex of photosystem II (PSII). PSII is a light-driven water:plastoquinone oxidoreductase that uses light energy to abstract electrons from H(2)O, generating O(2) and a proton gradient subsequently used for ATP formation. It consists of a core antenna complex that captures photons, and an electron transfer chain that converts photonic excitation into a charge separation. In Ipomoea purpurea (Common morning glory), this protein is Photosystem II reaction center protein J.